The sequence spans 305 residues: D-alanine--D-alanine ligase (305 aa).

One can recognise an ATP-grasp domain in the interval 105–300 (KMIWQAAGIN…FDELVVQILE (196 aa)). 131–186 (ADRLGLPLIIKPAREGSTLGLNKVDNEQDFRSAYQAAAEYDSLVLAEQFIQGIELT) contributes to the ATP binding site. Mg(2+)-binding residues include aspartate 254, glutamate 267, and asparagine 269.

It belongs to the D-alanine--D-alanine ligase family. Mg(2+) is required as a cofactor. It depends on Mn(2+) as a cofactor.

The protein resides in the cytoplasm. It catalyses the reaction 2 D-alanine + ATP = D-alanyl-D-alanine + ADP + phosphate + H(+). The protein operates within cell wall biogenesis; peptidoglycan biosynthesis. In terms of biological role, cell wall formation. The sequence is that of D-alanine--D-alanine ligase from Nitrosomonas europaea (strain ATCC 19718 / CIP 103999 / KCTC 2705 / NBRC 14298).